A 165-amino-acid polypeptide reads, in one-letter code: uncharacterized protein (165 aa).

Positions 49–165 (QLKPQGPKRP…VAQQREIAQK (117 aa)) are disordered. A compositionally biased stretch (polar residues) spans 94–106 (MNNNNNYKISYTS). Residues 120–135 (TLQRTTPQAQPTPQQP) show a composition bias toward low complexity. Positions 139–157 (SRSSGGITGAVNNRPQMVA) are enriched in polar residues.

This is an uncharacterized protein from Caenorhabditis elegans.